The chain runs to 115 residues: Large ribosomal subunit protein uL22 (115 aa).

Belongs to the universal ribosomal protein uL22 family. In terms of assembly, part of the 50S ribosomal subunit.

Functionally, this protein binds specifically to 23S rRNA; its binding is stimulated by other ribosomal proteins, e.g. L4, L17, and L20. It is important during the early stages of 50S assembly. It makes multiple contacts with different domains of the 23S rRNA in the assembled 50S subunit and ribosome. The globular domain of the protein is located near the polypeptide exit tunnel on the outside of the subunit, while an extended beta-hairpin is found that lines the wall of the exit tunnel in the center of the 70S ribosome. The chain is Large ribosomal subunit protein uL22 from Lactiplantibacillus plantarum (strain ATCC BAA-793 / NCIMB 8826 / WCFS1) (Lactobacillus plantarum).